The following is a 578-amino-acid chain: Vesicular acetylcholine transporter (578 aa).

Residues 1 to 32 (MASFQIPVINLEVREVKDIVWEKIQEPVNQRR) are Cytoplasmic-facing. Residues 33 to 53 (LILVIVSIALLLDNMLYMVIV) form a helical membrane-spanning segment. The Lumenal, vesicle segment spans residues 54–98 (PIIPDYLREIGSFDDGPTPPPLRDNITGKIIPVHHDHHGQDSATG). Asn-78 carries N-linked (GlcNAc...) asparagine glycosylation. The helical transmembrane segment at 99-119 (ILFASKAIVQLMVNPFSGGLI) threads the bilayer. At 120-125 (DKIGYD) the chain is on the cytoplasmic side. Residues 126-146 (LPMMIGLTIMFFSTAVFACGS) traverse the membrane as a helical segment. The Lumenal, vesicle portion of the chain corresponds to 147–154 (SYSVLFFA). A helical membrane pass occupies residues 155 to 175 (RSLQGAGSAFADTAGLAMIAD). Over 176–187 (RFTEENERSQAL) the chain is Cytoplasmic. Residues 188–208 (GIALAFISFGCLVAPPFGGAL) traverse the membrane as a helical segment. Residues 209–215 (YQFAGKE) are Lumenal, vesicle-facing. A helical transmembrane segment spans residues 216–236 (VPFLILALVCLLDGLMLLLVM). The Cytoplasmic segment spans residues 237–263 (KPVKEAMKQSKDVQDQVIPIWRLLMDP). Residues 264 to 284 (YIAVCAGALTMSNVALAFLEP) form a helical membrane-spanning segment. The Lumenal, vesicle portion of the chain corresponds to 285-299 (TISLWMEDNMTTDNW). Asn-293 is a glycosylation site (N-linked (GlcNAc...) asparagine). Residues 300-320 (KIGMVWLPAFFPHVLGVVITV) form a helical membrane-spanning segment. Over 321-330 (KMARKYPQHQ) the chain is Cytoplasmic. A helical membrane pass occupies residues 331–351 (WLMAAGGLALEGFSCFIIPFC). Over 352–355 (SGYK) the chain is Lumenal, vesicle. A helical transmembrane segment spans residues 356 to 376 (MLMLPICVICFGIALIDTALL). Residues 377–387 (PTLGYLVDVRY) lie on the Cytoplasmic side of the membrane. Residues 388–408 (VSVYGSIYAIADISYSIAYAV) traverse the membrane as a helical segment. Residues 409–413 (GPIIA) are Lumenal, vesicle-facing. A helical membrane pass occupies residues 414-434 (GGVVEAIGFTALNFLIAFSNL). Residues 435–578 (AYVPVLRKLR…APANPFRQGF (144 aa)) are Cytoplasmic-facing. Low complexity-rich tracts occupy residues 507–534 (EYQQ…EQGG) and 549–563 (QQQQ…QQVQ). The disordered stretch occupies residues 507-578 (EYQQQQQGYQ…APANPFRQGF (72 aa)).

It belongs to the major facilitator superfamily. Vesicular transporter family.

It localises to the membrane. Involved in acetylcholine transport into synaptic vesicles. This chain is Vesicular acetylcholine transporter (VAChT), found in Drosophila melanogaster (Fruit fly).